The chain runs to 227 residues: Staphylococcal superantigen-like 10 (227 aa).

Residues 1–30 (MKFTALAKATLALGILTTGTLTTEVHSGHA) form the signal peptide.

The protein belongs to the staphylococcal/streptococcal toxin family. As to quaternary structure, interacts with prothrombin/F2 and coagulation factor X/F12. Interacts with human CXCR4.

Its subcellular location is the secreted. Plays a role in the inhibition of host complement activation via the classical pathway by interacting with the Fc region of human IgG and thereby interfering with the IgG/C1q interaction. Also inhibits the penultimate step of plasma clotting by interacting with prothrombin/F2 and coagulation factor X/F12. Does not affect the protease activity of thrombin but interferes with the conversion of prothrombin to thrombin. Interacts with human receptor CXCR4 and specifically inhibits CXCL12-induced calcium mobilization and cell migration. The protein is Staphylococcal superantigen-like 10 of Staphylococcus aureus (strain NCTC 8325 / PS 47).